A 107-amino-acid polypeptide reads, in one-letter code: Large ribosomal subunit protein P2 (107 aa).

The segment at 86-107 (PAAAAAEAEEEDDDDMGFGLFD) is disordered. The span at 92 to 101 (EAEEEDDDDM) shows a compositional bias: acidic residues.

This sequence belongs to the eukaryotic ribosomal protein P1/P2 family. P1 and P2 exist as dimers at the large ribosomal subunit. Phosphorylated.

In terms of biological role, plays an important role in the elongation step of protein synthesis. The sequence is that of Large ribosomal subunit protein P2 from Trypanosoma brucei brucei.